We begin with the raw amino-acid sequence, 562 residues long: Potassium-transporting ATPase potassium-binding subunit (562 aa).

The next 12 membrane-spanning stretches (helical) occupy residues 6–26 (FLLI…LGSF), 63–83 (ALAI…LLMM), 132–152 (GLTV…FALI), 175–195 (LYVL…QGVL), 253–273 (FVQM…FGQV), 283–303 (LIWA…YAEL), 327–347 (FGIL…CGAV), 356–376 (ALGG…FGGV), 379–399 (GLYG…LMIG), 416–436 (MTAL…ALAL), 483–503 (LLLA…VLAI), and 526–546 (LFIG…FIPA).

This sequence belongs to the KdpA family. In terms of assembly, the system is composed of three essential subunits: KdpA, KdpB and KdpC.

Its subcellular location is the cell inner membrane. Its function is as follows. Part of the high-affinity ATP-driven potassium transport (or Kdp) system, which catalyzes the hydrolysis of ATP coupled with the electrogenic transport of potassium into the cytoplasm. This subunit binds the periplasmic potassium ions and delivers the ions to the membrane domain of KdpB through an intramembrane tunnel. In Yersinia enterocolitica serotype O:8 / biotype 1B (strain NCTC 13174 / 8081), this protein is Potassium-transporting ATPase potassium-binding subunit.